Consider the following 444-residue polypeptide: Docking protein 3 (444 aa).

The 117-residue stretch at 7 to 123 (PVKDGILYQQ…WVDPICQLAF (117 aa)) folds into the PH domain. Ser-138 is modified (phosphoserine). The region spanning 157 to 261 (EVTEFPVIVQ…ARQRERLPEL (105 aa)) is the IRS-type PTB domain. Ser-274 is modified (phosphoserine). The tract at residues 278–299 (LEPPGELREVAPGFELPTPRKL) is disordered. Phosphoserine is present on residues Ser-308 and Ser-314. Phosphotyrosine is present on Tyr-325. The segment at 354–390 (GLTNGGPEAQEGPPGGRSPLGSPIYHNTEDLSWPGSA) is disordered. Positions 358–376 (GGPEAQEGPPGGRSPLGSP) are enriched in low complexity. Ser-371 carries the phosphoserine modification.

Belongs to the DOK family. Type A subfamily. On tyrosine phosphorylation, interacts with CSK and INPP5D/SHIP1 via their SH2 domains. Both Tyr-325 and Tyr-343 are required for interaction with INPP5D. Only Tyr-325 is required for interaction with CSK. Binds ABL1 through the PTB domain and in a kinase-dependent manner. Does not interact with RasGAP. Post-translationally, constitutively tyrosine-phosphorylated. On IL2 stimulation, phosphorylated on C-terminal tyrosine residues possibly by Src kinases. Can also be phosphorylated by ABL1 kinase. As to expression, predominantly expressed in bone marrow, spleen and lung. Low levels in heart, brain, liver, muscle, thymus, kidney and testis. Highly expressed in B-cells and macrophages.

Its subcellular location is the cytoplasm. The protein resides in the cell membrane. Functionally, DOK proteins are enzymatically inert adaptor or scaffolding proteins. They provide a docking platform for the assembly of multimolecular signaling complexes. DOK3 is a negative regulator of JNK signaling in B-cells through interaction with INPP5D/SHIP1. May modulate ABL1 function. The chain is Docking protein 3 (Dok3) from Mus musculus (Mouse).